The primary structure comprises 548 residues: MSGNAIASTETEMEADHGNDPATGYEVIFRNTPLAICHLRNRAFVRCNTRFEELFGYARGELDNKSVRLLYPTDESFRTIGENYGHFFERHDTFKDERPIIRKDGSVIWCIVTGSLLDSSNPRLGSIWVVQDISEHKRTEDDLKASVEKLEILVHQRTLELHKHVNKLEQEVATRKLAEEVANEHREKYEKLFHMLPIGISITDNEGRILEANRQFTELVGTPEKPPITWQQLPQRFFLSDGTKVARKRLPWRIHDVQKDSIKNIEIGMREEESRKQRWLSVSSSLLELKGQKMVVAAFTDITYRKRIEELERLRHAELTRLGRINAMAGMAAALAHQMGQPLVSALNYLQGCRLRLEHIRGAAEISQSLGLAITHLDQAGEILRRVKDFVCKHTPERTPENINEVIQDTLSFLSFDVHRHNVTVNLQLIPSPPAVPLCKIEIQQVLFNLVKNGIEAMSEMEPESRILTIGNEISTDGRSMKIFVQDHGVGVEKRAEKRAFEPYFTTKPDGLGIGLTICRSIIESHGGELSFSKTGERGSKFQFTLPI.

Residues 20–89 enclose the PAS 1 domain; that stretch reads DPATGYEVIF…IGENYGHFFE (70 aa). Residues 94–145 form the PAC 1 domain; that stretch reads FKDERPIIRKDGSVIWCIVTGSLLDSSNPRLGSIWVVQDISEHKRTEDDLKA. One can recognise a PAS 2 domain in the interval 185–256; the sequence is HREKYEKLFH…RKRLPWRIHD (72 aa). The 52-residue stretch at 263–314 folds into the PAC 2 domain; sequence KNIEIGMREEESRKQRWLSVSSSLLELKGQKMVVAAFTDITYRKRIEELERL. Positions 334–548 constitute a Histidine kinase domain; it reads ALAHQMGQPL…GSKFQFTLPI (215 aa). Residue His-337 is modified to Phosphohistidine; by autocatalysis.

Autophosphorylated.

The catalysed reaction is ATP + protein L-histidine = ADP + protein N-phospho-L-histidine.. Functionally, member of the two-component regulatory system TdiR/TdiS, which probably regulates transcription of toluene catabolic genes (bss operon). May activate TdiR by phosphorylation. This is Sensor protein TdiS (tdiS) from Thauera aromatica.